Reading from the N-terminus, the 780-residue chain is Kojibiose phosphorylase (780 aa).

354–355 (WD) provides a ligand contact to substrate. Residue glutamate 496 is the Proton donor of the active site. 608 to 609 (KQ) contacts substrate.

It belongs to the glycosyl hydrolase 65 family.

The enzyme catalyses kojibiose + phosphate = beta-D-glucose 1-phosphate + D-glucose. Catalyzes the reversible phosphorolysis of kojibiose into beta-D-glucose 1-phosphate (Glc1P) and D-glucose. In the reverse direction, uses Glc1P as acceptor to produce alpha-1,2-glucans up to a degree of polymerization of 6. This is Kojibiose phosphorylase from Halothermothrix orenii (strain H 168 / OCM 544 / DSM 9562).